Consider the following 530-residue polypeptide: Putative sulfate transporter YvdB (530 aa).

A run of 10 helical transmembrane segments spans residues 19-39 (LIAGIVVGVVAIPLGMAFAIA), 41-61 (GVEPEYGLYTVVIAGICISLF), 68-88 (IGGPTGAFVPILFGIIMQYGL), 91-111 (LLIAGFMAGVMLVLFGLFKLG), 121-141 (VIVGFTAGIAVLIFTEQIANF), 164-184 (LGTFNVYAILTAVIGLVILLV), 192-212 (VPGALLALLISTVVAVVFFPD), 241-261 (MVMLFPAALVIALLGGLESIL), 313-333 (AVSPVSGVVHGVVVLLVLLVF), and 384-404 (VLFDLIIGVATGLLLAFVFFI). The STAS domain occupies 420–530 (PVLAKREDPS…FFDHHDEITG (111 aa)).

The protein belongs to the SLC26A/SulP transporter (TC 2.A.53) family.

It localises to the cell membrane. The protein is Putative sulfate transporter YvdB (yvdB) of Bacillus subtilis (strain 168).